The primary structure comprises 412 residues: Putative phosphate permease PF1020 (412 aa).

The next 10 membrane-spanning stretches (helical) occupy residues 7-27, 50-70, 88-108, 119-139, 143-163, 187-207, 213-233, 298-318, 335-355, and 384-404; these read MLAD…AWAI, AVII…KTVT, VLIF…VIAT, SIIG…IVNW, IKVV…AYLV, FWIG…VLHG, GFLK…SLIL, WILA…GYKV, FTID…GMPI, and DIII…GIIF.

This sequence belongs to the inorganic phosphate transporter (PiT) (TC 2.A.20) family.

It localises to the cell membrane. Its function is as follows. Potential transporter for phosphate. The sequence is that of Putative phosphate permease PF1020 from Pyrococcus furiosus (strain ATCC 43587 / DSM 3638 / JCM 8422 / Vc1).